Consider the following 132-residue polypeptide: Large ribosomal subunit protein bL17 (132 aa).

Belongs to the bacterial ribosomal protein bL17 family. As to quaternary structure, part of the 50S ribosomal subunit. Contacts protein L32.

The sequence is that of Large ribosomal subunit protein bL17 from Albidiferax ferrireducens (strain ATCC BAA-621 / DSM 15236 / T118) (Rhodoferax ferrireducens).